The following is a 413-amino-acid chain: Probable alpha-amylase 2 (413 aa).

Substrate-binding positions include 74 to 75 (YL) and 191 to 196 (RFDFAR). Catalysis depends on Asp193, which acts as the Nucleophile. Catalysis depends on Glu218, which acts as the Proton donor. Substrate-binding positions include Trp220, Ser222, Gln239, Asp246, Lys280, 286–288 (GWW), His299, Gln305, Lys386, and Trp411.

It belongs to the glycosyl hydrolase 13 family. Ca(2+) is required as a cofactor. As to expression, expressed in developing siliques.

Its subcellular location is the cytoplasm. It is found in the cytosol. The catalysed reaction is Endohydrolysis of (1-&gt;4)-alpha-D-glucosidic linkages in polysaccharides containing three or more (1-&gt;4)-alpha-linked D-glucose units.. In terms of biological role, probable alpha-amylase that does not seem to be required for breakdown of transitory starch in leaves. The sequence is that of Probable alpha-amylase 2 (AMY2) from Arabidopsis thaliana (Mouse-ear cress).